The following is a 467-amino-acid chain: Glycogen synthase (467 aa).

Lys-16 contributes to the ADP-alpha-D-glucose binding site.

It belongs to the glycosyltransferase 1 family. Bacterial/plant glycogen synthase subfamily.

The enzyme catalyses [(1-&gt;4)-alpha-D-glucosyl](n) + ADP-alpha-D-glucose = [(1-&gt;4)-alpha-D-glucosyl](n+1) + ADP + H(+). It functions in the pathway glycan biosynthesis; glycogen biosynthesis. Functionally, synthesizes alpha-1,4-glucan chains using ADP-glucose. The chain is Glycogen synthase from Paracoccus denitrificans (strain Pd 1222).